Here is a 216-residue protein sequence, read N- to C-terminus: uncharacterized protein (216 aa).

Residues 5–22 form a helical membrane-spanning segment; the sequence is LGLVFGSVILIYLISLFL.

It localises to the membrane. This is an uncharacterized protein from Aquifex aeolicus (strain VF5).